The following is a 155-amino-acid chain: uncharacterized protein (155 aa).

An N-acetyltransferase domain is found at 6–155 (LRIELGEETN…RDMVRLYLDL (150 aa)). Residues 69 to 71 (IAV), 77 to 82 (KKGFGK), and 111 to 117 (QLSLYQK) each bind CoA.

Probable N-acetyltransferase. This is an uncharacterized protein from Bacillus subtilis (strain 168).